A 379-amino-acid polypeptide reads, in one-letter code: MMKDIVIIGAGFAARQLIRQLRKLDAHCPIRLITADSGDEYNKPDLSHVMSLQQHADDLTKMQATAFAEENRIALQANTRVTAIDRNAQQVVCGTDRYDYHKLVFATGASAIVPPIPGREHMLTLNSQQEYRTHEARLWQAERVLVLGAGLIGTELAMDLSRAGKRVTLVDCASSILPALMPPEVSARLQFTLTQQGVSLLLNTTVQQLEKTETGVQARFTDGRTVEVDEIISAVGLQANTQLAKAADLAVQKGIQTNAQLQTPDPQIYALGDCAEIGGKLLPFLQPIQLSAITLAKNLLGASEALTLPPMLVKIKTPLFPLQMAGDTTGSDLHWQQEWNEQGMVAKALDSQQRLRAFVVGGERMKEAFPLLRQLSATI.

This sequence belongs to the FAD-dependent oxidoreductase family. The cofactor is FAD.

The protein resides in the cytoplasm. It catalyses the reaction 2 reduced [nitric oxide reductase rubredoxin domain] + NAD(+) + H(+) = 2 oxidized [nitric oxide reductase rubredoxin domain] + NADH. It participates in nitrogen metabolism; nitric oxide reduction. Functionally, one of at least two accessory proteins for anaerobic nitric oxide (NO) reductase. Reduces the rubredoxin moiety of NO reductase. The chain is Nitric oxide reductase FlRd-NAD(+) reductase from Pectobacterium atrosepticum (strain SCRI 1043 / ATCC BAA-672) (Erwinia carotovora subsp. atroseptica).